A 379-amino-acid chain; its full sequence is MLSLSLGGQFMNNNIRVGSLFGIPFYVNPSWFLILGLVTLSYGQDLARFPQLSGGTPWILGLITALLLFASVVAHELGHSLVALAQGIEVKSITLFLFGGLASLEKESNTPWQAFAVAIAGPAVSLVLFLGLTIVGTQIPLPVPGQAIIGLLGMINLALALFNLIPGLPLDGGNVLKSIVWQITGNQNKGILIASRVGQGFGWLAIAIGSLGILNILPIGSFWTILIGWFLLQNAGSSARNAQVKEQMEAFTAEDAVIPNSPIIPAGLNIREFANDYVIGKTPWRRFLVIGADNQLLGVLATEDIKHVPTSDWPQVTVDSLMQYPQQMVTVNANQSLFEVAQLLDQQKLSELLVVQPSGEVVGLLEKASIIKCLQTSAA.

Helical transmembrane passes span 20 to 40 and 54 to 74; these read LFGIPFYVNPSWFLILGLVTL and GGTPWILGLITALLLFASVVA. Residue H75 coordinates Zn(2+). Residue E76 is part of the active site. H79 is a binding site for Zn(2+). 3 helical membrane-spanning segments follow: residues 115–135, 148–168, and 212–232; these read FAVAIAGPAVSLVLFLGLTIV, IIGLLGMINLALALFNLIPGL, and GILNILPIGSFWTILIGWFLL. CBS domains are found at residues 257 to 315 and 322 to 379; these read VIPN…DWPQ and MQYP…TSAA.

This sequence belongs to the peptidase M50B family. Requires Zn(2+) as cofactor.

The protein resides in the cell membrane. The protein is Putative zinc metalloprotease sll0528 of Synechocystis sp. (strain ATCC 27184 / PCC 6803 / Kazusa).